The chain runs to 656 residues: Chaperone protein DnaK (656 aa).

The segment covering 590–605 (GGAAGGAAGGAAGGAA) has biased composition (gly residues). The segment at 590 to 656 (GGAAGGAAGG…DGQPKPGPAA (67 aa)) is disordered. A compositionally biased stretch (low complexity) spans 606-621 (GDAAGAAGDSTGDAAG). Over residues 622 to 635 (AAGGPSEGPAGDAG) the composition is skewed to gly residues.

The protein belongs to the heat shock protein 70 family.

Its function is as follows. Acts as a chaperone. The protein is Chaperone protein DnaK of Cenarchaeum symbiosum (strain A).